The sequence spans 193 residues: uncharacterized protein (193 aa).

A run of 3 helical transmembrane segments spans residues 5–25 (LILL…FIIF), 63–83 (IFIL…LINI), and 90–110 (ILTF…LTPA).

The protein localises to the cell membrane. This is an uncharacterized protein from Methanocaldococcus jannaschii (strain ATCC 43067 / DSM 2661 / JAL-1 / JCM 10045 / NBRC 100440) (Methanococcus jannaschii).